The sequence spans 472 residues: UDP-N-acetylmuramate--L-alanine ligase (472 aa).

119-125 (GTHGKTT) lines the ATP pocket.

It belongs to the MurCDEF family.

The protein localises to the cytoplasm. The catalysed reaction is UDP-N-acetyl-alpha-D-muramate + L-alanine + ATP = UDP-N-acetyl-alpha-D-muramoyl-L-alanine + ADP + phosphate + H(+). The protein operates within cell wall biogenesis; peptidoglycan biosynthesis. Its function is as follows. Cell wall formation. The chain is UDP-N-acetylmuramate--L-alanine ligase from Caulobacter sp. (strain K31).